Here is a 500-residue protein sequence, read N- to C-terminus: MGSIDSTNVAMSNSPVGEFKPLEAEEFRKQAHRMVDFIADYYKNVETYPVLSEVEPGYLRKRIPETAPYLPEPLDDIMKDIQKDIIPGMTNWMSPNFYAFFPATVSSAAFLGEMLSTALNSVGFTWVSSPAATELEMIVMDWLAQILKLPKSFMFSGTGGGVIQNTTSESILCTIIAARERALEKLGPDSIGKLVCYGSDQTHTMFPKTCKLAGIYPNNIRLIPTTVETDFGISPQVLRKMVEDDVAAGYVPLFLCATLGTTSTTATDPVDSLSEIANEFGIWIHVDAAYAGSACICPEFRHYLDGIERVDSLSLSPHKWLLAYLDCTCLWVKQPHLLLRALTTNPEYLKNKQSDLDKVVDFKNWQIATGRKFRSLKLWLILRSYGVVNLQSHIRSDVAMGKMFEEWVRSDSRFEIVVPRNFSLVCFRLKPDVSSLHVEEVNKKLLDMLNSTGRVYMTHTIVGGIYMLRLAVGSSLTEEHHVRRVWDLIQKLTDDLLKEA.

L-tryptophan is bound at residue Pro-102. Ser-168 provides a ligand contact to pyridoxal 5'-phosphate. His-203 contributes to the L-tryptophan binding site. Residue Thr-262 coordinates pyridoxal 5'-phosphate. His-318 contacts L-tryptophan. Lys-319 carries the post-translational modification N6-(pyridoxal phosphate)lysine. Residue Tyr-348 coordinates L-tryptophan.

This sequence belongs to the group II decarboxylase family. Homodimer. Requires pyridoxal 5'-phosphate as cofactor.

It catalyses the reaction L-tryptophan + H(+) = tryptamine + CO2. The catalysed reaction is 5-hydroxy-L-tryptophan + H(+) = serotonin + CO2. Functionally, catalyzes the decarboxylation of L-tryptophan to tryptamine and L-5-hydroxytryptophan to serotonin, respectively. This is Aromatic-L-amino-acid decarboxylase from Catharanthus roseus (Madagascar periwinkle).